The chain runs to 93 residues: Small ribosomal subunit protein uS19 (93 aa).

The protein belongs to the universal ribosomal protein uS19 family.

In terms of biological role, protein S19 forms a complex with S13 that binds strongly to the 16S ribosomal RNA. This is Small ribosomal subunit protein uS19 from Anaplasma marginale (strain Florida).